The following is a 495-amino-acid chain: Serine/threonine-protein kinase STN8, chloroplastic (495 aa).

Residues 1–49 (MASLLSPATPTATSAAFHSCSTAGFSTPTHISSQNSSLSLLSRRGCMMR) constitute a chloroplast transit peptide. In terms of domain architecture, Protein kinase spans 133–477 (FLVTEKLGEG…AAAALRHPYF (345 aa)). ATP is bound by residues 139–147 (LGEGSFGVV) and lysine 186. The active-site Proton acceptor is the aspartate 308.

Belongs to the protein kinase superfamily. Ser/Thr protein kinase family.

Its subcellular location is the plastid. It is found in the chloroplast thylakoid. It carries out the reaction L-seryl-[protein] + ATP = O-phospho-L-seryl-[protein] + ADP + H(+). The enzyme catalyses L-threonyl-[protein] + ATP = O-phospho-L-threonyl-[protein] + ADP + H(+). Light-dependent serine/threonine protein kinase that specifically phosphorylates N-terminal threonine residues in psbA/D1, psbD/D2, psbC/CP43 and psbH, which are components of the core antenna complex of photosystem II. Phosphorylation of PSII core components facilitates the exchange of chlorophyll proteins between the grana and the stroma lamellae. Also involved in the phosphorylation of the calcium-sensing receptor (CaS). The chain is Serine/threonine-protein kinase STN8, chloroplastic (STN8) from Arabidopsis thaliana (Mouse-ear cress).